Here is a 263-residue protein sequence, read N- to C-terminus: Indole-3-glycerol phosphate synthase (263 aa).

It belongs to the TrpC family.

It catalyses the reaction 1-(2-carboxyphenylamino)-1-deoxy-D-ribulose 5-phosphate + H(+) = (1S,2R)-1-C-(indol-3-yl)glycerol 3-phosphate + CO2 + H2O. It functions in the pathway amino-acid biosynthesis; L-tryptophan biosynthesis; L-tryptophan from chorismate: step 4/5. This chain is Indole-3-glycerol phosphate synthase, found in Sulfurimonas denitrificans (strain ATCC 33889 / DSM 1251) (Thiomicrospira denitrificans (strain ATCC 33889 / DSM 1251)).